The chain runs to 522 residues: Glucans biosynthesis protein G (522 aa).

The signal sequence occupies residues 1–33 (MLVNILSKKPRAASVRWLGATVLFTLLTSPAWA).

Belongs to the OpgD/OpgG family.

The protein localises to the periplasm. It participates in glycan metabolism; osmoregulated periplasmic glucan (OPG) biosynthesis. Its function is as follows. Involved in the biosynthesis of osmoregulated periplasmic glucans (OPGs). The protein is Glucans biosynthesis protein G of Serratia proteamaculans (strain 568).